The following is a 187-amino-acid chain: Probable DNA endonuclease SmrA (187 aa).

The region spanning 88–169 (LNLLRQPVEE…GSGACYVALR (82 aa)) is the Smr domain.

Has DNA endonuclease activity. Binds DNA. This Escherichia coli (strain K12) protein is Probable DNA endonuclease SmrA (smrA).